A 38-amino-acid polypeptide reads, in one-letter code: Potassium channel toxin alpha-KTx 3.11 (38 aa).

Disulfide bonds link cysteine 8–cysteine 28, cysteine 14–cysteine 33, and cysteine 18–cysteine 35.

It belongs to the short scorpion toxin superfamily. Potassium channel inhibitor family. Alpha-KTx 03 subfamily. In terms of tissue distribution, expressed by the venom gland.

It is found in the secreted. In terms of biological role, blocks the voltage-gated potassium channel Kv1.3/KCNA3 (IC(50)=7.2 nM). Correnti and colleagues have also shown that this toxin inhibits Kv1.1/KCNA1, which is different from Abdel-Mottaleb and colleagues conclusions. The polypeptide is Potassium channel toxin alpha-KTx 3.11 (Odontobuthus doriae (Yellow Iranian scorpion)).